Consider the following 288-residue polypeptide: Acetyl-coenzyme A carboxylase carboxyl transferase subunit beta (288 aa).

Residues 34 to 288 (LFAKCPACKH…HLVSFHGGGQ (255 aa)) enclose the CoA carboxyltransferase N-terminal domain. C38, C41, C56, and C59 together coordinate Zn(2+). A C4-type zinc finger spans residues 38 to 59 (CPACKHMIYKKDLGLAKICPTC).

The protein belongs to the AccD/PCCB family. Acetyl-CoA carboxylase is a heterohexamer composed of biotin carboxyl carrier protein (AccB), biotin carboxylase (AccC) and two subunits each of ACCase subunit alpha (AccA) and ACCase subunit beta (AccD). Requires Zn(2+) as cofactor.

It is found in the cytoplasm. The enzyme catalyses N(6)-carboxybiotinyl-L-lysyl-[protein] + acetyl-CoA = N(6)-biotinyl-L-lysyl-[protein] + malonyl-CoA. Its pathway is lipid metabolism; malonyl-CoA biosynthesis; malonyl-CoA from acetyl-CoA: step 1/1. Component of the acetyl coenzyme A carboxylase (ACC) complex. Biotin carboxylase (BC) catalyzes the carboxylation of biotin on its carrier protein (BCCP) and then the CO(2) group is transferred by the transcarboxylase to acetyl-CoA to form malonyl-CoA. This is Acetyl-coenzyme A carboxylase carboxyl transferase subunit beta from Streptococcus pyogenes serotype M49 (strain NZ131).